A 443-amino-acid polypeptide reads, in one-letter code: Chorionicgonadotropic hormone-like protein (443 aa).

The segment covering 263-286 (RCAGRPCPRRHRRPCNASKSHRPM) has biased composition (basic residues). The tract at residues 263 to 292 (RCAGRPCPRRHRRPCNASKSHRPMRMQQRD) is disordered.

The protein to mammalian CGHB.

It is found in the secreted. It localises to the cell wall. Functionally, cell wall protein that resembles the beta subunit of human chorionic gonadotropin. Stimulates growth and change in morphology. This is Chorionicgonadotropic hormone-like protein (xcg) from Stenotrophomonas maltophilia (Pseudomonas maltophilia).